Reading from the N-terminus, the 66-residue chain is Large ribosomal subunit protein bL33c (66 aa).

Belongs to the bacterial ribosomal protein bL33 family.

Its subcellular location is the plastid. The protein resides in the chloroplast. The polypeptide is Large ribosomal subunit protein bL33c (Oryza nivara (Indian wild rice)).